The following is a 392-amino-acid chain: Xyloside xylosyltransferase 1 (392 aa).

Residues Met-1 to Ala-19 lie on the Cytoplasmic side of the membrane. The chain crosses the membrane as a helical; Signal-anchor for type II membrane protein span at residues Leu-20 to Gly-42. At Ser-43–Asp-392 the chain is on the lumenal side. Met-103–Thr-105 serves as a coordination point for UDP-alpha-D-xylose. Residue Asp-225 participates in Mn(2+) binding. Leu-226 contacts UDP-alpha-D-xylose. Asp-227 serves as a coordination point for Mn(2+). Positions His-262–Trp-265 are interaction with target proteins. UDP-alpha-D-xylose-binding residues include Ser-289, Leu-327, and Gln-330. Residues Gln-330 and Trp-359 each contribute to the a glycoprotein site. Intrachain disulfides connect Cys-349/Cys-374 and Cys-356/Cys-385. His-382 serves as a coordination point for Mn(2+). An a glycoprotein-binding site is contributed by Asn-384.

It belongs to the glycosyltransferase 8 family. In terms of assembly, homodimer. Dimer formation may be essential for the retention in endoplasmic reticulum. Mg(2+) is required as a cofactor. Requires Mn(2+) as cofactor.

It is found in the endoplasmic reticulum membrane. The catalysed reaction is 3-O-[alpha-D-xylosyl-(1-&gt;3)-beta-D-glucosyl]-L-seryl-[EGF-like domain protein] + UDP-alpha-D-xylose = 3-O-[alpha-D-xylosyl-(1-&gt;3)-alpha-D-xylosyl-(1-&gt;3)-beta-D-glucosyl]-L-seryl-[EGF-like domain protein] + UDP + H(+). Alpha-1,3-xylosyltransferase, which elongates the O-linked xylose-glucose disaccharide attached to EGF-like repeats in the extracellular domain of target proteins by catalyzing the addition of the second xylose. Known targets include Notch proteins and coagulation factors, such as F9. The chain is Xyloside xylosyltransferase 1 (Xxylt1) from Mus musculus (Mouse).